We begin with the raw amino-acid sequence, 376 residues long: Cobalt-precorrin-5B C(1)-methyltransferase (376 aa).

This sequence belongs to the CbiD family.

It carries out the reaction Co-precorrin-5B + S-adenosyl-L-methionine = Co-precorrin-6A + S-adenosyl-L-homocysteine. It participates in cofactor biosynthesis; adenosylcobalamin biosynthesis; cob(II)yrinate a,c-diamide from sirohydrochlorin (anaerobic route): step 6/10. Functionally, catalyzes the methylation of C-1 in cobalt-precorrin-5B to form cobalt-precorrin-6A. The chain is Cobalt-precorrin-5B C(1)-methyltransferase from Bradyrhizobium sp. (strain BTAi1 / ATCC BAA-1182).